Consider the following 130-residue polypeptide: Cytochrome b-c1 complex subunit 7 (130 aa).

The protein belongs to the UQCRB/QCR7 family. In terms of assembly, component of the ubiquinol-cytochrome c oxidoreductase (cytochrome b-c1 complex, complex III, CIII), a multisubunit enzyme composed of 3 respiratory subunits cytochrome b, cytochrome c1 and Rieske protein, 2 core protein subunits, and additional low-molecular weight protein subunits. The complex exists as an obligatory dimer and forms supercomplexes (SCs) in the inner mitochondrial membrane with cytochrome c oxidase (complex IV, CIV).

The protein resides in the mitochondrion inner membrane. Its function is as follows. Component of the ubiquinol-cytochrome c oxidoreductase, a multisubunit transmembrane complex that is part of the mitochondrial electron transport chain which drives oxidative phosphorylation. The respiratory chain contains 3 multisubunit complexes succinate dehydrogenase (complex II, CII), ubiquinol-cytochrome c oxidoreductase (cytochrome b-c1 complex, complex III, CIII) and cytochrome c oxidase (complex IV, CIV), that cooperate to transfer electrons derived from NADH and succinate to molecular oxygen, creating an electrochemical gradient over the inner membrane that drives transmembrane transport and the ATP synthase. The cytochrome b-c1 complex catalyzes electron transfer from ubiquinol to cytochrome c, linking this redox reaction to translocation of protons across the mitochondrial inner membrane, with protons being carried across the membrane as hydrogens on the quinol. In the process called Q cycle, 2 protons are consumed from the matrix, 4 protons are released into the intermembrane space and 2 electrons are passed to cytochrome c. The polypeptide is Cytochrome b-c1 complex subunit 7 (Schistosoma mansoni (Blood fluke)).